Consider the following 506-residue polypeptide: Glutamate--tRNA ligase (506 aa).

The 'HIGH' region signature appears at 23 to 33 (PSPTGTPHVGL). The 'KMSKS' region motif lies at 267-271 (KLSKR). K270 lines the ATP pocket.

This sequence belongs to the class-I aminoacyl-tRNA synthetase family. Glutamate--tRNA ligase type 1 subfamily. As to quaternary structure, monomer.

The protein resides in the cytoplasm. It carries out the reaction tRNA(Glu) + L-glutamate + ATP = L-glutamyl-tRNA(Glu) + AMP + diphosphate. Catalyzes the attachment of glutamate to tRNA(Glu) in a two-step reaction: glutamate is first activated by ATP to form Glu-AMP and then transferred to the acceptor end of tRNA(Glu). The polypeptide is Glutamate--tRNA ligase (Clavibacter sepedonicus (Clavibacter michiganensis subsp. sepedonicus)).